The primary structure comprises 51 residues: Insulin-1 (51 aa).

Cystine bridges form between cysteine 8–cysteine 37, cysteine 20–cysteine 50, and cysteine 36–cysteine 41.

This sequence belongs to the insulin family. Heterodimer of a B chain and an A chain linked by two disulfide bonds.

Its subcellular location is the secreted. Functionally, insulin decreases blood glucose concentration. It increases cell permeability to monosaccharides, amino acids and fatty acids. It accelerates glycolysis, the pentose phosphate cycle, and glycogen synthesis in liver. In Batrachoididae sp. (Toadfish), this protein is Insulin-1 (ins1).